The following is a 606-amino-acid chain: Threonine dehydratase 1 biosynthetic, chloroplastic (606 aa).

Lysine 154 carries the post-translational modification N6-(pyridoxal phosphate)lysine. ACT-like domains lie at 432–504 (AVLA…NLTD) and 526–597 (LLCR…MESL).

This sequence belongs to the serine/threonine dehydratase family. Requires pyridoxal 5'-phosphate as cofactor. In terms of tissue distribution, expressed constitutively in all tissues examined including root, stem, petiole, leaf, immature flower bud, unopened flower and opened flower with the highest expression in opened flower and lowest in leaf.

Its subcellular location is the plastid. The protein localises to the chloroplast. It catalyses the reaction L-threonine = 2-oxobutanoate + NH4(+). It participates in amino-acid biosynthesis; L-isoleucine biosynthesis; 2-oxobutanoate from L-threonine: step 1/1. With respect to regulation, strongly inhibited by 1 mM isoleucine. In terms of biological role, has a housekeeping role in isoleucine biosynthesis. This is Threonine dehydratase 1 biosynthetic, chloroplastic from Solanum lycopersicum (Tomato).